A 641-amino-acid polypeptide reads, in one-letter code: Fructose-1,6-bisphosphatase class 3 (641 aa).

This sequence belongs to the FBPase class 3 family. Requires Mn(2+) as cofactor.

The catalysed reaction is beta-D-fructose 1,6-bisphosphate + H2O = beta-D-fructose 6-phosphate + phosphate. It participates in carbohydrate biosynthesis; gluconeogenesis. This Ligilactobacillus salivarius (strain UCC118) (Lactobacillus salivarius) protein is Fructose-1,6-bisphosphatase class 3.